The following is a 408-amino-acid chain: Digeranylgeranylglycerophospholipid reductase 1 (408 aa).

Residues A15, E34, C45, A46, G48, R99, V123, D279, G291, and I292 each coordinate FAD.

It belongs to the geranylgeranyl reductase family. DGGGPL reductase subfamily. FAD is required as a cofactor.

It catalyses the reaction a 2,3-bis-O-phytanyl-sn-glycerol 1-phospholipid + 8 oxidized 2[4Fe-4S]-[ferredoxin] = a 2,3-bis-O-(geranylgeranyl)-sn-glycerol 1-phospholipid + 8 reduced 2[4Fe-4S]-[ferredoxin] + 16 H(+). It carries out the reaction 2,3-bis-O-(phytanyl)-sn-glycerol 1-phosphate + 8 oxidized 2[4Fe-4S]-[ferredoxin] = 2,3-bis-O-(geranylgeranyl)-sn-glycerol 1-phosphate + 8 reduced 2[4Fe-4S]-[ferredoxin] + 16 H(+). The catalysed reaction is a 2,3-bis-O-phytanyl-sn-glycerol 1-phospholipid + 8 A = a 2,3-bis-O-(geranylgeranyl)-sn-glycerol 1-phospholipid + 8 AH2. The enzyme catalyses CDP-2,3-bis-O-(geranylgeranyl)-sn-glycerol + 8 AH2 = CDP-2,3-bis-O-(phytanyl)-sn-glycerol + 8 A. It catalyses the reaction archaetidylserine + 8 AH2 = 2,3-bis-O-phytanyl-sn-glycero-3-phospho-L-serine + 8 A. It functions in the pathway membrane lipid metabolism; glycerophospholipid metabolism. Its function is as follows. Is involved in the reduction of 2,3-digeranylgeranylglycerophospholipids (unsaturated archaeols) into 2,3-diphytanylglycerophospholipids (saturated archaeols) in the biosynthesis of archaeal membrane lipids. Catalyzes the formation of archaetidic acid (2,3-di-O-phytanyl-sn-glyceryl phosphate) from 2,3-di-O-geranylgeranylglyceryl phosphate (DGGGP) via the hydrogenation of each double bond of the isoprenoid chains. Is also probably able to reduce double bonds of geranyl groups in CDP-2,3-bis-O-(geranylgeranyl)-sn-glycerol and archaetidylserine, thus acting at various stages in the biosynthesis of archaeal membrane lipids. This Methanococcoides burtonii (strain DSM 6242 / NBRC 107633 / OCM 468 / ACE-M) protein is Digeranylgeranylglycerophospholipid reductase 1.